The sequence spans 208 residues: Ribosomal RNA small subunit methyltransferase G (208 aa).

Residues Gly-78, Phe-83, Glu-101–Ser-103, Ile-129–Glu-130, and Arg-142 each bind S-adenosyl-L-methionine.

This sequence belongs to the methyltransferase superfamily. RNA methyltransferase RsmG family.

It is found in the cytoplasm. In terms of biological role, specifically methylates the N7 position of a guanine in 16S rRNA. The sequence is that of Ribosomal RNA small subunit methyltransferase G from Borreliella burgdorferi (strain ATCC 35210 / DSM 4680 / CIP 102532 / B31) (Borrelia burgdorferi).